A 652-amino-acid chain; its full sequence is MLKDNQKHNESVAPNSAFLSELQRALPEFFTADRYNEQGELIAKGGFDLARFERALKARNIDELTSGYQIDFIGKDYAKKQAGEKSVTVIVPDVEHNTLAENKNSHNLFLTGDNLDVLRHLQNNYADTVDMIYIDPPYNTGSDGFVYPDHFEYSDRALQDMFGLNDTELARLKSIQGKSTHSAWLSFMYPRLFLARKLLKDTGFIFISIDDNEYANLKLMMDEIFGEGGFVTNVMWKRKKEISNDSDNVSIQGEYILVYAKTGQGALRLEPLSKEYIQKSYKEPTEQFPEGKWRPVPLTVSKGLSGGGYTYKITTPNGTVHERLWAYPEASYQKLVADNLVYFGKDNGGIPQRVMYAHHSKGQPTTNYWDNVASNKEGKKEILDLFGDNVFDTPKPTALLKKIIKLAIDKDGVVLDFFAGSGTTAHAVMALNEEDGGQRTFILCTIDQALSNNTIAKKAGYNTIDEISRERITRVAAKIRANNPATNSDLGFKHYRFATPTQQTLDDLDSFDIATGHFINTSGQLAAFTESGFTDMINPFSARGLGVPGGASGEETLLTTWLVADGYKMDIDVQTVDFSGYCARYVDNTRLYLIDERWGTEQTRDLLNHIGTHQLPVQTIVIYGYSFDLESIRELEIGLKQLDQKVNLVKRY.

The interval 135-138 (DPPY) is binding of S-adenosyl methionine.

Belongs to the N(4)/N(6)-methyltransferase family. In terms of assembly, homodimer, also forms a functional restriction-competent complex with Res.

It catalyses the reaction a 2'-deoxyadenosine in DNA + S-adenosyl-L-methionine = an N(6)-methyl-2'-deoxyadenosine in DNA + S-adenosyl-L-homocysteine + H(+). Its function is as follows. A beta subtype methylase that binds the system-specific DNA recognition site 5'-CAGAG-3' and methylates A-4 (of only 1 strand as the other does not have an A residue). DNA restriction requires both the Res and Mod subunits. The protein is Type III restriction-modification enzyme StyLTI Mod subunit of Salmonella typhimurium (strain LT2 / SGSC1412 / ATCC 700720).